The sequence spans 1006 residues: DNA polymerase (1006 aa).

This sequence belongs to the DNA polymerase type-B family. Interacts with OPG148. Component of the Uracil-DNA glycosylase(UDG)-OPG148-polymerase complex; OPG148 and OPG116/UDG form a heterodimeric processivity factor that associates with OPG071 to form the processive polymerase holoenzyme.

It catalyses the reaction DNA(n) + a 2'-deoxyribonucleoside 5'-triphosphate = DNA(n+1) + diphosphate. Catalyzes DNA synthesis. Acquires processivity by associating with a heterodimeric processivity factor comprised of the viral OPG148 and OPG116 proteins, thereby forming the DNA polymerase holoenzyme. Displays 3'- to 5' exonuclease activity. Might participate in viral DNA recombination. Does not perform OPG116/D4synthesis across an abasic site. The sequence is that of DNA polymerase (OPG071) from Homo sapiens (Human).